We begin with the raw amino-acid sequence, 399 residues long: Presilphiperfolan-8-beta-ol synthase (399 aa).

Residues 1 to 60 (MAIPALEPQLHDADTSSNNMSSNSTDSGYDTNSTTPLEKSEKPNTQELKQQQLDPKRPPF) are disordered. Over residues 15-27 (TSSNNMSSNSTDS) the composition is skewed to low complexity. Polar residues predominate over residues 28–37 (GYDTNSTTPL). Residues Asp141, Asn285, and Ser289 each coordinate Mg(2+). Residues 141-145 (DDQFD) carry the DDXXD motif motif. Residues Arg373 and Tyr374 each coordinate (2E,6E)-farnesyl diphosphate.

This sequence belongs to the terpene synthase family. Mg(2+) serves as cofactor.

It catalyses the reaction (2E,6E)-farnesyl diphosphate + H2O = presilphiperfolan-8beta-ol + diphosphate. The protein operates within secondary metabolite biosynthesis. Its function is as follows. Presilphiperfolan-8-beta-ol synthase; part of the gene cluster that mediates the biosynthesis of botrydial. Botrydial is necessary for colonization of plant tissue by the T4 strain. It is a strain-dependent virulence factor since highly aggressive strains like SAS56 or B05 still retain substantial virulence when botrydial synthesis is impaired, since they produce also botcinic acid. The first step of botrydial biosynthesis is performed by the sesquiterpene synthase BOT2 which catalyzes the cyclization of farnesyl diphosphate (FPP) to presilphiperfolan-8-beta-ol (PSP). The cytochrome P450 monooxygenase BOT4 then catalyzes the hydroxylation at C-4 to give a probotryane intermediate. Acetylation of the hydroxyl at C-4 is carried out by the acetyltransferase BOT5, followed by the combined action of the P450 monooxygenases BOT3 and BOT1, to yield finally the glycol, via the regio- and stereospecific hydroxylations at C-10 and C-15 of the probotryane intermediates, respectively. The cleavage of the C10-C15 bond of probotryane skeleton is an intriguing and chemically important reaction, which could be mediated by some of the monooxygenases or by a combination of them. It is possible that either BOT3 or BOT1 would oxidize either the 10- or the 15-hydroxy group to the hydroperoxide derivative, which would then undergo heterolytic fragmentation to give the dialdehyde botrydial. Finally, the dehydrogenase BOT7 might be involved in the conversion of botrydial to dihydrobotrydial. This chain is Presilphiperfolan-8-beta-ol synthase (BOT2), found in Botryotinia fuckeliana (Noble rot fungus).